A 742-amino-acid chain; its full sequence is Phosphoribosylformylglycinamidine synthase subunit PurL (742 aa).

The active site involves His-54. Positions 57 and 96 each coordinate ATP. A Mg(2+)-binding site is contributed by Glu-98. Substrate-binding positions include 99–102 and Arg-121; that span reads SHNH. The Proton acceptor role is filled by His-100. Asp-122 provides a ligand contact to Mg(2+). Gln-245 serves as a coordination point for substrate. Asp-273 is a binding site for Mg(2+). 317–319 is a substrate binding site; the sequence is ESQ. ATP-binding residues include Asp-500 and Gly-537. Asn-538 contributes to the Mg(2+) binding site. A substrate-binding site is contributed by Ser-540.

The protein belongs to the FGAMS family. As to quaternary structure, monomer. Part of the FGAM synthase complex composed of 1 PurL, 1 PurQ and 2 PurS subunits.

Its subcellular location is the cytoplasm. The catalysed reaction is N(2)-formyl-N(1)-(5-phospho-beta-D-ribosyl)glycinamide + L-glutamine + ATP + H2O = 2-formamido-N(1)-(5-O-phospho-beta-D-ribosyl)acetamidine + L-glutamate + ADP + phosphate + H(+). The protein operates within purine metabolism; IMP biosynthesis via de novo pathway; 5-amino-1-(5-phospho-D-ribosyl)imidazole from N(2)-formyl-N(1)-(5-phospho-D-ribosyl)glycinamide: step 1/2. Its function is as follows. Part of the phosphoribosylformylglycinamidine synthase complex involved in the purines biosynthetic pathway. Catalyzes the ATP-dependent conversion of formylglycinamide ribonucleotide (FGAR) and glutamine to yield formylglycinamidine ribonucleotide (FGAM) and glutamate. The FGAM synthase complex is composed of three subunits. PurQ produces an ammonia molecule by converting glutamine to glutamate. PurL transfers the ammonia molecule to FGAR to form FGAM in an ATP-dependent manner. PurS interacts with PurQ and PurL and is thought to assist in the transfer of the ammonia molecule from PurQ to PurL. This chain is Phosphoribosylformylglycinamidine synthase subunit PurL, found in Geobacillus thermodenitrificans (strain NG80-2).